The following is a 166-amino-acid chain: Transcriptional repressor NrdR (166 aa).

A zinc finger lies at 3–34; that stretch reads CPHCHHNGSRVVDSRPTDDGRVIRRRRECESC. An ATP-cone domain is found at 49–139; the sequence is LLVIKKNGTR…VYRQFKDTGV (91 aa).

It belongs to the NrdR family. Zn(2+) serves as cofactor.

In terms of biological role, negatively regulates transcription of bacterial ribonucleotide reductase nrd genes and operons by binding to NrdR-boxes. The sequence is that of Transcriptional repressor NrdR from Levilactobacillus brevis (strain ATCC 367 / BCRC 12310 / CIP 105137 / JCM 1170 / LMG 11437 / NCIMB 947 / NCTC 947) (Lactobacillus brevis).